Reading from the N-terminus, the 158-residue chain is Large ribosomal subunit protein uL22 (158 aa).

Belongs to the universal ribosomal protein uL22 family. In terms of assembly, part of the 50S ribosomal subunit.

Its function is as follows. This protein binds specifically to 23S rRNA. It makes multiple contacts with different domains of the 23S rRNA in the assembled 50S subunit and ribosome. In terms of biological role, the globular domain of the protein is located near the polypeptide exit tunnel on the outside of the subunit, while an extended beta-hairpin is found that lines the wall of the exit tunnel in the center of the 70S ribosome. The protein is Large ribosomal subunit protein uL22 of Haloquadratum walsbyi (strain DSM 16790 / HBSQ001).